The sequence spans 376 residues: Putative aryl-alcohol dehydrogenase AAD14 (376 aa).

The active-site Proton donor is Y76. Residue H151 coordinates substrate. Position 236 to 246 (D236 to K246) interacts with NADP(+).

This sequence belongs to the aldo/keto reductase family. Aldo/keto reductase 2 subfamily.

The protein is Putative aryl-alcohol dehydrogenase AAD14 (AAD14) of Saccharomyces cerevisiae (strain ATCC 204508 / S288c) (Baker's yeast).